We begin with the raw amino-acid sequence, 460 residues long: Carboxypeptidase DacB (460 aa).

A signal peptide spans 1 to 28; it reads MRPTRWRRSTHVAVGVAVLALVVAVVAA. The disordered stretch occupies residues 39 to 64; sequence AAEAVPPAPPPATADPGVVPVDLSAP. The active-site Acyl-ester intermediate is the S113. The Proton acceptor role is filled by K116. Residue S294 is part of the active site.

Belongs to the peptidase S13 family.

In terms of biological role, carboxypeptidase that cleaves terminal D-alanine from peptidoglycan in the mycobacterial cell wall. May cleave L-Lys-D-Ala and/or D-Ala-D-Ala peptide bonds. Exerts important effects on mycobacterial cell morphology and cell division. This chain is Carboxypeptidase DacB, found in Mycolicibacterium smegmatis (strain ATCC 700084 / mc(2)155) (Mycobacterium smegmatis).